The sequence spans 287 residues: MLYLAKMRNAEGEFTENEQKIATFLLAHVGELKTVSSRNMAKQLEISQSSIVKFAQKLGANGFTELRMALIEEHSVSREKKRDKAVHLHSSITSEDSLEMMARKLNREKIVALEETYNLMDYERLEQVINLISKAPLIQITGVGGSALVGRDLSFKLMKIGFRVACEVDTHVQATIAQALRQGDVQIAISYSGSKKEIVLCAEAARKQGATVIAITSLADSPLRRLADYTLDTVSGETEWRSSSMSTRTAQNSVTDLLFVGMVQLNDVESLRMIERSSELITLLDRS.

The 77-residue stretch at 1-77 (MLYLAKMRNA…MALIEEHSVS (77 aa)) folds into the HTH rpiR-type domain. Residues 37 to 56 (SRNMAKQLEISQSSIVKFAQ) constitute a DNA-binding region (H-T-H motif). An SIS domain is found at 128–268 (VINLISKAPL…FVGMVQLNDV (141 aa)).

Homotetramer.

It functions in the pathway amino-sugar metabolism; N-acetylmuramate degradation [regulation]. Functionally, represses the expression of the murPQ operon involved in the uptake and degradation of N-acetylmuramic acid (MurNAc). Binds to two adjacent inverted repeats within the operator region. MurNAc 6-phosphate, the substrate of MurQ, is the specific inducer that weakens binding of MurR to the operator. This Salmonella arizonae (strain ATCC BAA-731 / CDC346-86 / RSK2980) protein is HTH-type transcriptional regulator MurR.